The following is a 396-amino-acid chain: Elongation factor Tu (396 aa).

A tr-type G domain is found at 10 to 206; it reads KPHVNIGTIG…AVDNYIPEPE (197 aa). Positions 19–26 are G1; the sequence is GHVDHGKT. 19-26 lines the GTP pocket; sequence GHVDHGKT. Threonine 26 serves as a coordination point for Mg(2+). The segment at 60–64 is G2; that stretch reads GITIA. The segment at 81 to 84 is G3; it reads DCPG. Residues 81-85 and 136-139 contribute to the GTP site; these read DCPGH and NKAD. A G4 region spans residues 136 to 139; sequence NKAD. The G5 stretch occupies residues 174–176; that stretch reads SAL.

This sequence belongs to the TRAFAC class translation factor GTPase superfamily. Classic translation factor GTPase family. EF-Tu/EF-1A subfamily. As to quaternary structure, monomer.

Its subcellular location is the cytoplasm. The catalysed reaction is GTP + H2O = GDP + phosphate + H(+). Functionally, GTP hydrolase that promotes the GTP-dependent binding of aminoacyl-tRNA to the A-site of ribosomes during protein biosynthesis. The polypeptide is Elongation factor Tu (Geobacter sulfurreducens (strain ATCC 51573 / DSM 12127 / PCA)).